The primary structure comprises 145 residues: Transcription antitermination protein NusB (145 aa).

Belongs to the NusB family.

Involved in transcription antitermination. Required for transcription of ribosomal RNA (rRNA) genes. Binds specifically to the boxA antiterminator sequence of the ribosomal RNA (rrn) operons. This chain is Transcription antitermination protein NusB, found in Ruminiclostridium cellulolyticum (strain ATCC 35319 / DSM 5812 / JCM 6584 / H10) (Clostridium cellulolyticum).